A 311-amino-acid chain; its full sequence is Olfactory receptor 6C3 (311 aa).

Residues 1-22 (MNHTMVTEFVLLGLSDDPDLQI) are Extracellular-facing. N2 carries N-linked (GlcNAc...) asparagine glycosylation. Residues 23 to 43 (VIFLFLFITYILSVTGNLTII) form a helical membrane-spanning segment. Residues 44 to 51 (TLTFVDSH) are Cytoplasmic-facing. Residues 52–72 (LQTPMYFFLRNFSFLEISFTT) traverse the membrane as a helical segment. Residues 73–96 (VCIPRFLGAIITRNKTISYNNCAA) are Extracellular-facing. A disulfide bridge links C94 with C186. Residues 97 to 117 (QLFFFIFMGVTEFYILTAMSY) traverse the membrane as a helical segment. Over 118–136 (DRYVAICKPLHYTSIMNRK) the chain is Cytoplasmic. Residues 137-157 (LCTLLVLCAWLSGFLTIFPPL) form a helical membrane-spanning segment. At 158–194 (MLLLQLDYCASNVIDHFACDYFPLLQLSCSDTWLLEV) the chain is on the extracellular side. Residues 195-214 (IGFYFALVTLLFTLALVILS) form a helical membrane-spanning segment. Topologically, residues 215 to 234 (YMYIIRTILRIPSASQRKKA) are cytoplasmic. A helical transmembrane segment spans residues 235 to 255 (FSTCSSHMIVISISYGSCIFM). The Extracellular segment spans residues 256–268 (YANPSAKEKASLT). The chain crosses the membrane as a helical span at residues 269 to 289 (KGIAILNTSVAPMLNPFIYTL). Residues 290–311 (RNQQVKQAFKNVVHKVVFYANQ) lie on the Cytoplasmic side of the membrane.

It belongs to the G-protein coupled receptor 1 family.

It localises to the cell membrane. Odorant receptor. The chain is Olfactory receptor 6C3 (OR6C3) from Homo sapiens (Human).